Consider the following 570-residue polypeptide: Urease subunit alpha (570 aa).

The 440-residue stretch at 131-570 (GGVDTHIHFI…LPMAQRYFLF (440 aa)) folds into the Urease domain. Residues His-136, His-138, and Lys-219 each contribute to the Ni(2+) site. Lys-219 carries the N6-carboxylysine modification. Residue His-221 coordinates substrate. The Ni(2+) site is built by His-248 and His-274. His-322 functions as the Proton donor in the catalytic mechanism. Asp-362 provides a ligand contact to Ni(2+).

This sequence belongs to the metallo-dependent hydrolases superfamily. Urease alpha subunit family. As to quaternary structure, heterotrimer of UreA (gamma), UreB (beta) and UreC (alpha) subunits. Three heterotrimers associate to form the active enzyme. Requires Ni cation as cofactor. In terms of processing, carboxylation allows a single lysine to coordinate two nickel ions.

It localises to the cytoplasm. The enzyme catalyses urea + 2 H2O + H(+) = hydrogencarbonate + 2 NH4(+). It participates in nitrogen metabolism; urea degradation; CO(2) and NH(3) from urea (urease route): step 1/1. The protein is Urease subunit alpha of Methylocella silvestris (strain DSM 15510 / CIP 108128 / LMG 27833 / NCIMB 13906 / BL2).